We begin with the raw amino-acid sequence, 213 residues long: Ribosome maturation factor RimM (213 aa).

The PRC barrel domain occupies 99–175 (DQDAAYISDL…RITMRLPEGL (77 aa)). A disordered region spans residues 182–213 (TATAREPRARRTRKRGLRKPITGADATPPDSQ). Positions 189 to 199 (RARRTRKRGLR) are enriched in basic residues.

This sequence belongs to the RimM family. As to quaternary structure, binds ribosomal protein uS19.

It localises to the cytoplasm. In terms of biological role, an accessory protein needed during the final step in the assembly of 30S ribosomal subunit, possibly for assembly of the head region. Essential for efficient processing of 16S rRNA. May be needed both before and after RbfA during the maturation of 16S rRNA. It has affinity for free ribosomal 30S subunits but not for 70S ribosomes. In Acidobacterium capsulatum (strain ATCC 51196 / DSM 11244 / BCRC 80197 / JCM 7670 / NBRC 15755 / NCIMB 13165 / 161), this protein is Ribosome maturation factor RimM.